The sequence spans 465 residues: A-type ATP synthase subunit B (465 aa).

It belongs to the ATPase alpha/beta chains family. As to quaternary structure, has multiple subunits with at least A(3), B(3), C, D, E, F, H, I and proteolipid K(x).

The protein localises to the cell membrane. In terms of biological role, component of the A-type ATP synthase that produces ATP from ADP in the presence of a proton gradient across the membrane. The B chain is a regulatory subunit. In Pyrococcus horikoshii (strain ATCC 700860 / DSM 12428 / JCM 9974 / NBRC 100139 / OT-3), this protein is A-type ATP synthase subunit B.